A 63-amino-acid chain; its full sequence is Sperm protamine P1 (63 aa).

The segment at Met-1–Arg-47 is disordered.

Belongs to the protamine P1 family. In terms of tissue distribution, testis.

The protein localises to the nucleus. It localises to the chromosome. Protamines substitute for histones in the chromatin of sperm during the haploid phase of spermatogenesis. They compact sperm DNA into a highly condensed, stable and inactive complex. This is Sperm protamine P1 (PRM1) from Planigale tenuirostris (Narrow-nosed planigale).